The sequence spans 73 residues: MRITYPSIDKLLDEVDSRYSLSVLAAKRAGELEAGKPGALDNYHNLKPVGQALEEIAAGKVTIDADPHGEADE.

This sequence belongs to the RNA polymerase subunit omega family. In terms of assembly, the RNAP catalytic core consists of 2 alpha, 1 beta, 1 beta' and 1 omega subunit. When a sigma factor is associated with the core the holoenzyme is formed, which can initiate transcription.

It carries out the reaction RNA(n) + a ribonucleoside 5'-triphosphate = RNA(n+1) + diphosphate. In terms of biological role, promotes RNA polymerase assembly. Latches the N- and C-terminal regions of the beta' subunit thereby facilitating its interaction with the beta and alpha subunits. This Lactobacillus delbrueckii subsp. bulgaricus (strain ATCC BAA-365 / Lb-18) protein is DNA-directed RNA polymerase subunit omega.